The following is a 356-amino-acid chain: Phenylalanine--tRNA ligase alpha subunit (356 aa).

A Mg(2+)-binding site is contributed by glutamate 260.

This sequence belongs to the class-II aminoacyl-tRNA synthetase family. Phe-tRNA synthetase alpha subunit type 1 subfamily. Tetramer of two alpha and two beta subunits. The cofactor is Mg(2+).

The protein resides in the cytoplasm. It carries out the reaction tRNA(Phe) + L-phenylalanine + ATP = L-phenylalanyl-tRNA(Phe) + AMP + diphosphate + H(+). The polypeptide is Phenylalanine--tRNA ligase alpha subunit (Gluconacetobacter diazotrophicus (strain ATCC 49037 / DSM 5601 / CCUG 37298 / CIP 103539 / LMG 7603 / PAl5)).